Here is a 337-residue protein sequence, read N- to C-terminus: GTPase Obg (337 aa).

Residues 4–162 (SNFIDYVKVC…AWVILELKVL (159 aa)) form the Obg domain. Positions 163–329 (ADVGLVGFPN…LKDLLWTTMN (167 aa)) constitute an OBG-type G domain. Residues 169 to 176 (GFPNAGKS), 194 to 198 (FTTLA), 216 to 219 (DIPG), 283 to 286 (SKSD), and 310 to 312 (SSY) contribute to the GTP site. Positions 176 and 196 each coordinate Mg(2+).

This sequence belongs to the TRAFAC class OBG-HflX-like GTPase superfamily. OBG GTPase family. In terms of assembly, monomer. Requires Mg(2+) as cofactor.

The protein resides in the cytoplasm. In terms of biological role, an essential GTPase which binds GTP, GDP and possibly (p)ppGpp with moderate affinity, with high nucleotide exchange rates and a fairly low GTP hydrolysis rate. Plays a role in control of the cell cycle, stress response, ribosome biogenesis and in those bacteria that undergo differentiation, in morphogenesis control. This Cytophaga hutchinsonii (strain ATCC 33406 / DSM 1761 / CIP 103989 / NBRC 15051 / NCIMB 9469 / D465) protein is GTPase Obg.